Here is a 392-residue protein sequence, read N- to C-terminus: D-amino-acid oxidase 2 (392 aa).

Ser10, Ile13, Arg33, Asp34, Ala45, Ser46, Gly50, and Asn52 together coordinate FAD. Phe56, Tyr245, Tyr262, and Arg311 together coordinate anthranilate. Residues Tyr245, Tyr262, and Arg311 each coordinate (R)-lactate. Arg311, Gly361, Ser362, Gly364, and Gln366 together coordinate FAD. Residue Ser362 participates in anthranilate binding. Residue Ser362 coordinates (R)-lactate. The short motif at 390-392 (AKL) is the Microbody targeting signal element.

Belongs to the DAMOX/DASOX family. FAD serves as cofactor.

The protein resides in the peroxisome matrix. It carries out the reaction a D-alpha-amino acid + O2 + H2O = a 2-oxocarboxylate + H2O2 + NH4(+). The enzyme catalyses D-methionine + O2 + H2O = 4-methylsulfanyl-2-oxobutanoate + H2O2 + NH4(+). The catalysed reaction is D-serine + O2 + H2O = 3-hydroxypyruvate + H2O2 + NH4(+). It catalyses the reaction D-histidine + O2 + H2O = 3-(imidazol-5-yl)pyruvate + H2O2 + NH4(+). It carries out the reaction D-proline + O2 = 1-pyrroline-2-carboxylate + H2O2. The enzyme catalyses D-alanine + O2 + H2O = pyruvate + H2O2 + NH4(+). The catalysed reaction is D-leucine + O2 + H2O = 4-methyl-2-oxopentanoate + H2O2 + NH4(+). It catalyses the reaction D-valine + O2 + H2O = 3-methyl-2-oxobutanoate + H2O2 + NH4(+). Its function is as follows. Catalyzes the oxidative deamination of D-amino acids with broad substrate specificity. Enables the organism to utilize D-amino acids as a source of nutrients. Enables the organism to utilize D-alanine, D-cysteine, D-histidine, D-leucine, D-methionine, D-phenylalanine, D-proline, D-serine, D-threonine, D-aspartate and D-valine as a nitrogen source and may also contribute to utlization of D-tryptophan, D-tyrosine and D-asparagine as a nitrogen source. Protects the organism from the toxicity of D-amino acids, including from D-alanine. May play a role in its interaction with the host. The polypeptide is D-amino-acid oxidase 2 (Cryptococcus deuterogattii (strain R265) (Cryptococcus gattii VGII (strain R265))).